Reading from the N-terminus, the 195-residue chain is ATP-dependent Clp protease proteolytic subunit (195 aa).

S99 serves as the catalytic Nucleophile. The active site involves H124.

It belongs to the peptidase S14 family. Fourteen ClpP subunits assemble into 2 heptameric rings which stack back to back to give a disk-like structure with a central cavity, resembling the structure of eukaryotic proteasomes.

The protein resides in the cytoplasm. The enzyme catalyses Hydrolysis of proteins to small peptides in the presence of ATP and magnesium. alpha-casein is the usual test substrate. In the absence of ATP, only oligopeptides shorter than five residues are hydrolyzed (such as succinyl-Leu-Tyr-|-NHMec, and Leu-Tyr-Leu-|-Tyr-Trp, in which cleavage of the -Tyr-|-Leu- and -Tyr-|-Trp bonds also occurs).. Functionally, cleaves peptides in various proteins in a process that requires ATP hydrolysis. Has a chymotrypsin-like activity. Plays a major role in the degradation of misfolded proteins. This Coxiella burnetii (strain CbuG_Q212) (Coxiella burnetii (strain Q212)) protein is ATP-dependent Clp protease proteolytic subunit.